A 669-amino-acid chain; its full sequence is Serine/threonine-protein kinase hippo (669 aa).

2 positions are modified to phosphoserine: Ser30 and Ser33. The Protein kinase domain occupies 42-293 (FDIMYKLGEG…ATELLEHEFI (252 aa)). ATP-binding positions include 48–56 (LGEGSYGSV) and Lys71. Asp161 acts as the Proton acceptor in catalysis. The residue at position 195 (Thr195) is a Phosphothreonine; by Tao. Over residues 432-445 (MVINSDSDDSTTAK) the composition is skewed to polar residues. The segment at 432 to 508 (MVINSDSDDS…QQQQQDEQHL (77 aa)) is disordered. The segment covering 460–479 (FLEHFDRKNAGDGRGDEKPI) has biased composition (basic and acidic residues). The segment covering 490 to 503 (QQQQQQQQQQQQQQ) has biased composition (low complexity). The SARAH domain occupies 608-655 (FEFLKFLTFDDLNQRLCNIDHEMELEIEQLNKKYNAKRQPIVDAMNAK).

This sequence belongs to the protein kinase superfamily. STE Ser/Thr protein kinase family. STE20 subfamily. Homodimer. Interacts with Sav and Wts. Interacts (via SARAH domain) with Ex. Interacts with Kibra. Post-translationally, autophosphorylated. Expressed in CNS during embryogenesis. In third instar larvae, it is expressed throughout all imaginal disks.

It localises to the apical cell membrane. The protein resides in the cytoplasm. The enzyme catalyses L-seryl-[protein] + ATP = O-phospho-L-seryl-[protein] + ADP + H(+). It carries out the reaction L-threonyl-[protein] + ATP = O-phospho-L-threonyl-[protein] + ADP + H(+). Its function is as follows. Plays a key role in the Hippo/SWH (Sav/Wts/Hpo) signaling pathway, a signaling pathway that plays a pivotal role in organ size control and tumor suppression by restricting proliferation and promoting apoptosis. The core of this pathway is composed of a kinase cascade wherein Hippo (Hpo), in complex with its regulatory protein Salvador (Sav), phosphorylates and activates Warts (Wts) in complex with its regulatory protein Mats, which in turn phosphorylates and inactivates the Yorkie (Yki) oncoprotein. The Hippo/SWH signaling pathway inhibits the activity of the transcriptional complex formed by Scalloped (sd) and Yki and the target genes of this pathway include cyclin-E (cycE), diap1 and bantam. Phosphorylates Sav, Wts and Th/DIAP1. Regulates the level of Th/DIAP1 apoptosis inhibitor. The sequence is that of Serine/threonine-protein kinase hippo (hpo) from Drosophila melanogaster (Fruit fly).